We begin with the raw amino-acid sequence, 610 residues long: Butyryl-CoA dehydrogenase Swol_1933 (610 aa).

Glutamate 451 serves as the catalytic Proton acceptor.

Belongs to the acyl-CoA dehydrogenase family. FAD is required as a cofactor.

The protein resides in the cytoplasm. The catalysed reaction is butanoyl-CoA + oxidized [electron-transfer flavoprotein] + H(+) = (2E)-butenoyl-CoA + reduced [electron-transfer flavoprotein]. It carries out the reaction a short-chain 2,3-saturated fatty acyl-CoA + oxidized [electron-transfer flavoprotein] + H(+) = a short-chain (2E)-enoyl-CoA + reduced [electron-transfer flavoprotein]. It participates in lipid metabolism; butanoate metabolism. In terms of biological role, involved in syntrophic growth of S.wolfei with butyrate, as part of the butyrate oxidation pathway. Catalyzes the oxidation of butanoyl-CoA to crotonyl-CoA. Probably passes the electrons released by this reaction on to electron-transfer flavoproteins (EtfAB) to finally generate hydrogen and/or formate. The sequence is that of Butyryl-CoA dehydrogenase Swol_1933 from Syntrophomonas wolfei subsp. wolfei (strain DSM 2245B / Goettingen).